We begin with the raw amino-acid sequence, 594 residues long: Isocitrate dehydrogenase kinase/phosphatase (594 aa).

ATP is bound by residues 315-321 (APGIRGM) and Lys-336. Residue Asp-371 is part of the active site.

It belongs to the AceK family.

The protein resides in the cytoplasm. It carries out the reaction L-seryl-[isocitrate dehydrogenase] + ATP = O-phospho-L-seryl-[isocitrate dehydrogenase] + ADP + H(+). Functionally, bifunctional enzyme which can phosphorylate or dephosphorylate isocitrate dehydrogenase (IDH) on a specific serine residue. This is a regulatory mechanism which enables bacteria to bypass the Krebs cycle via the glyoxylate shunt in response to the source of carbon. When bacteria are grown on glucose, IDH is fully active and unphosphorylated, but when grown on acetate or ethanol, the activity of IDH declines drastically concomitant with its phosphorylation. The chain is Isocitrate dehydrogenase kinase/phosphatase from Klebsiella pneumoniae (strain 342).